A 422-amino-acid chain; its full sequence is Tyrosine--tRNA ligase (422 aa).

Y37 is a binding site for L-tyrosine. A 'HIGH' region motif is present at residues 42–51 (PTEESLHIGH). L-tyrosine-binding residues include Y175 and Q179. The short motif at 235–239 (KFGKT) is the 'KMSKS' region element. An ATP-binding site is contributed by K238. An S4 RNA-binding domain is found at 357–414 (KDLQEALVLTSLAQSRTQAKNMIISNSISINTEKIRKNHIFHEKDKLFGKFTLLSRGK).

This sequence belongs to the class-I aminoacyl-tRNA synthetase family. TyrS type 1 subfamily. Homodimer.

It localises to the cytoplasm. It catalyses the reaction tRNA(Tyr) + L-tyrosine + ATP = L-tyrosyl-tRNA(Tyr) + AMP + diphosphate + H(+). In terms of biological role, catalyzes the attachment of tyrosine to tRNA(Tyr) in a two-step reaction: tyrosine is first activated by ATP to form Tyr-AMP and then transferred to the acceptor end of tRNA(Tyr). This is Tyrosine--tRNA ligase from Buchnera aphidicola subsp. Acyrthosiphon pisum (strain 5A).